The following is a 458-amino-acid chain: ATP synthase subunit beta (458 aa).

147–154 contacts ATP; that stretch reads GGAGVGKT.

This sequence belongs to the ATPase alpha/beta chains family. F-type ATPases have 2 components, CF(1) - the catalytic core - and CF(0) - the membrane proton channel. CF(1) has five subunits: alpha(3), beta(3), gamma(1), delta(1), epsilon(1). CF(0) has three main subunits: a(1), b(2) and c(9-12). The alpha and beta chains form an alternating ring which encloses part of the gamma chain. CF(1) is attached to CF(0) by a central stalk formed by the gamma and epsilon chains, while a peripheral stalk is formed by the delta and b chains.

It localises to the cell inner membrane. The catalysed reaction is ATP + H2O + 4 H(+)(in) = ADP + phosphate + 5 H(+)(out). Produces ATP from ADP in the presence of a proton gradient across the membrane. The catalytic sites are hosted primarily by the beta subunits. The sequence is that of ATP synthase subunit beta from Chromohalobacter salexigens (strain ATCC BAA-138 / DSM 3043 / CIP 106854 / NCIMB 13768 / 1H11).